We begin with the raw amino-acid sequence, 285 residues long: Isoprenyl transferase 2 (285 aa).

The segment at 11–30 (RREYRAPEPHPSGARAPKLP) is disordered. Residue Asp43 is part of the active site. Residue Asp43 participates in Mg(2+) binding. Substrate is bound by residues 44 to 47 (GNGR), Trp48, Arg56, His60, and 88 to 90 (STE). Asn91 acts as the Proton acceptor in catalysis. Substrate-binding positions include Trp92, Arg94, Arg211, and 217 to 219 (RTS). Position 230 (Glu230) interacts with Mg(2+).

Belongs to the UPP synthase family. In terms of assembly, homodimer. Mg(2+) is required as a cofactor.

Functionally, catalyzes the condensation of isopentenyl diphosphate (IPP) with allylic pyrophosphates generating different type of terpenoids. The chain is Isoprenyl transferase 2 from Streptomyces avermitilis (strain ATCC 31267 / DSM 46492 / JCM 5070 / NBRC 14893 / NCIMB 12804 / NRRL 8165 / MA-4680).